The chain runs to 952 residues: Inactive atromentin synthetase invA6 (952 aa).

The adenylation (A) domain stretch occupies residues 58-462 (DSSVQTRSFS…NGRIKDTVIV (405 aa)). A Carrier domain is found at 594–672 (APSTETEKTL…SLAKYVDSLV (79 aa)). A thiolation and peptide carrier (T) domain region spans residues 599-669 (TEKTLGRLYA…VISSLAKYVD (71 aa)). Ser-631 is subject to O-(pantetheine 4'-phosphoryl)serine. The tract at residues 695 to 939 (PIFMVHPGIG…LMDFDHVSGF (245 aa)) is thioesterase (TE) domain.

Belongs to the ATP-dependent AMP-binding enzyme family.

Functionally, inactive atromentin synthetase homolog. Does not accept 4-hydroxyphenylpyruvate (4-HPP) as substrate. Both the adenylation (A) and the thioesterase (TE) domain of the invA6 enzyme are inactive. This Paxillus involutus (Naked brimcap) protein is Inactive atromentin synthetase invA6 (invA6).